Consider the following 467-residue polypeptide: UDP-glycosyltransferase 71D1 (467 aa).

Histidine 16 acts as the Proton acceptor in catalysis. Histidine 16 contacts an anthocyanidin. The active-site Charge relay is the aspartate 122. 7 residues coordinate UDP-alpha-D-glucose: threonine 144, glutamine 341, histidine 356, tryptophan 359, asparagine 360, serine 361, and glutamate 364. An anthocyanidin is bound at residue alanine 379. Positions 380 and 381 each coordinate UDP-alpha-D-glucose.

This sequence belongs to the UDP-glycosyltransferase family.

It catalyses the reaction a flavonol + UDP-alpha-D-glucose = a flavonol 3-O-beta-D-glucoside + UDP + H(+). Functionally, possesses quercetin 3-O-glucosyltransferase activity in vitro. In Arabidopsis thaliana (Mouse-ear cress), this protein is UDP-glycosyltransferase 71D1 (UGT71D1).